The following is a 617-amino-acid chain: Alkaline/neutral invertase E, chloroplastic (617 aa).

A chloroplast-targeting transit peptide spans 1 to 45 (MAASETVLRVPLGSVSQSCYLASFFVNSTPNLSFKPVSRNRKTVR). Residue Ser-87 is modified to Phosphoserine.

This sequence belongs to the glycosyl hydrolase 100 family. Expressed in roots, leaves and flowers.

Its subcellular location is the plastid. The protein localises to the chloroplast. The catalysed reaction is Hydrolysis of terminal non-reducing beta-D-fructofuranoside residues in beta-D-fructofuranosides.. In terms of biological role, chloroplastic invertase that cleaves sucrose into glucose and fructose and is associated with the development of the photosynthetic apparatus and the assimilation of nitrogen in seedlings to control the sucrose to hexose ratio. Participates in the carbon flux between the cytosol and plastids in leaves. This chain is Alkaline/neutral invertase E, chloroplastic, found in Arabidopsis thaliana (Mouse-ear cress).